A 398-amino-acid polypeptide reads, in one-letter code: Sphingosine 1-phosphate receptor 5 (398 aa).

Over 1–40 (MEPGLLRPAPVSEVIVLHYNYTGKLRGARYQPGAGLRADA) the chain is Extracellular. The N-linked (GlcNAc...) asparagine glycan is linked to Asn20. A helical transmembrane segment spans residues 41-61 (VVCLAVCALIVLENLAVLVVL). Topologically, residues 62-70 (GRHPRFHAP) are cytoplasmic. Residues 71 to 91 (MFLLLGSLTLSDLLAGAAYAA) form a helical membrane-spanning segment. Over 92 to 111 (NILLSGPLTLRLSPALWFAR) the chain is Extracellular. A helical membrane pass occupies residues 112 to 132 (EGGVFVALAASVLSLLAIALE). The Cytoplasmic portion of the chain corresponds to 133 to 151 (RLLTMERRGPAPAARRGRT). The chain crosses the membrane as a helical span at residues 152–172 (LALAAGAWGVSLLLGLLPALG). The Extracellular segment spans residues 173–191 (WNCLGRLEACSTVLPLYAK). The chain crosses the membrane as a helical span at residues 192–212 (AYVLFCVLAFVGILAAICGLY). Topologically, residues 213–252 (ARIYCQVRAKAQRLRARPGAGEGTSARARGTPRSLALLRT) are cytoplasmic. The chain crosses the membrane as a helical span at residues 253 to 273 (LSVVLVAFVACWGPLFLLLLL). The Extracellular portion of the chain corresponds to 274–287 (DVACPARACPVLLQ). A helical membrane pass occupies residues 288–308 (ADPFLGLAMANSLLNPIIYTF). At 309–398 (TNRDLRHALL…QTLVPPPAAD (90 aa)) the chain is on the cytoplasmic side. A lipid anchor (S-palmitoyl cysteine) is attached at Cys323. Residues 332-398 (SGTSRSPGST…QTLVPPPAAD (67 aa)) form a disordered region. Over residues 334–343 (TSRSPGSTLG) the composition is skewed to low complexity. A Phosphoserine modification is found at Ser337. Positions 359–373 (SSSRSERSSPQRDGL) are enriched in basic and acidic residues. Residue Ser381 is modified to Phosphoserine.

This sequence belongs to the G-protein coupled receptor 1 family.

It is found in the cell membrane. Functionally, receptor for the lysosphingolipid sphingosine 1-phosphate (S1P). S1P is a bioactive lysophospholipid that elicits diverse physiological effect on most types of cells and tissues. Is coupled to both the G(i/O)alpha and G(12) subclass of heteromeric G-proteins. The chain is Sphingosine 1-phosphate receptor 5 (S1PR5) from Sus scrofa (Pig).